Here is a 571-residue protein sequence, read N- to C-terminus: MRTSQYLLATQKETPADAVVISHQLMLRAGMIRKLASGLYTWLPMGLRVMRKVEAVVREEMNAAGALEVLMPSIQPAELWQESGRWEQYGPELLRLKDRHQRDFCVGPTHEEVITDLARNELSSYKQLPLNLYQIQTKFRDEIRPRFGLMRGREFIMKDAYSFHADQASLQETYDRMHQAYSNVFTRLGLDFRPVQADTGSIGGSYSHEFHVLAESGEDDVIFSDSSDYAANIEKAEAIPRETVRPAPTEELRLVDTPNAKTIAQLVENHGLPIEKTVKTLIVRGAEEGKLIALIVRGDHELNEIKATKLEQVADPLVMATEAELRDAIGAGAGSLGPLNLPLEIIIDRSVALMSDFGIGANIDDKHYFGVNWERDLPVPQVADLRNVVEGDPSPDGQGTLVIKRGIEVGHIFQLGTKYSEALKCQVLGENGKPVVLSMGCYGIGVSRVVAAAIEQSYDDKGIIWNDALAPFQIALVPLRYETDVVREATDKLYAELTAAGYEVLLDDRDKKTSPGIKFADMELIGIPHRIVVSDRGLAEGNLEYKHRTEQDAQALPLNEVLTFLQARVRR.

It belongs to the class-II aminoacyl-tRNA synthetase family. ProS type 1 subfamily. As to quaternary structure, homodimer.

It is found in the cytoplasm. The enzyme catalyses tRNA(Pro) + L-proline + ATP = L-prolyl-tRNA(Pro) + AMP + diphosphate. Catalyzes the attachment of proline to tRNA(Pro) in a two-step reaction: proline is first activated by ATP to form Pro-AMP and then transferred to the acceptor end of tRNA(Pro). As ProRS can inadvertently accommodate and process non-cognate amino acids such as alanine and cysteine, to avoid such errors it has two additional distinct editing activities against alanine. One activity is designated as 'pretransfer' editing and involves the tRNA(Pro)-independent hydrolysis of activated Ala-AMP. The other activity is designated 'posttransfer' editing and involves deacylation of mischarged Ala-tRNA(Pro). The misacylated Cys-tRNA(Pro) is not edited by ProRS. The sequence is that of Proline--tRNA ligase from Pseudomonas putida (strain ATCC 47054 / DSM 6125 / CFBP 8728 / NCIMB 11950 / KT2440).